Reading from the N-terminus, the 182-residue chain is Ribosome maturation factor RimP (182 aa).

Belongs to the RimP family.

The protein localises to the cytoplasm. Its function is as follows. Required for maturation of 30S ribosomal subunits. This is Ribosome maturation factor RimP from Corynebacterium efficiens (strain DSM 44549 / YS-314 / AJ 12310 / JCM 11189 / NBRC 100395).